Here is a 130-residue protein sequence, read N- to C-terminus: uncharacterized protein (130 aa).

This is an uncharacterized protein from Acanthamoeba polyphaga mimivirus (APMV).